The primary structure comprises 511 residues: Transcription factor bHLH28 (511 aa).

Residues 339-388 enclose the bHLH domain; sequence DKPLNHVEAERMRREKLNHRFYALRAVVPNVSKMDKTSLLEDAVCYINEL.

Homodimer.

The protein resides in the nucleus. This is Transcription factor bHLH28 (BHLH28) from Arabidopsis thaliana (Mouse-ear cress).